Reading from the N-terminus, the 304-residue chain is Killer cell immunoglobulin-like receptor 2DS2 (304 aa).

Residues 1–21 form the signal peptide; the sequence is MSLMVVSMACVGFFLLQGAWP. Over 22–245 the chain is Extracellular; it reads HEGVHRKPSL…SKTGNPRHLH (224 aa). Ig-like C2-type domains lie at 42–107 and 142–205; these read EETV…VTHS and GESV…FRDS. Intrachain disulfides connect C49–C100 and C149–C198. N84, N178, and N211 each carry an N-linked (GlcNAc...) asparagine glycan. Positions 220 to 239 are disordered; sequence VTGNPSNSWPSPTEPSSKTG. Residues 246-265 form a helical membrane-spanning segment; sequence VLIGTSVVKIPFTILLFFLL. Over 266 to 304 the chain is Cytoplasmic; the sequence is HRWCSNKKNAAVMDQEPAGNRTVNSEDSDEQDHQEVSYA. Residues 280-304 are disordered; sequence QEPAGNRTVNSEDSDEQDHQEVSYA.

Belongs to the immunoglobulin superfamily.

The protein localises to the cell membrane. In terms of biological role, receptor on natural killer (NK) cells for HLA-C alleles. Does not inhibit the activity of NK cells. This Homo sapiens (Human) protein is Killer cell immunoglobulin-like receptor 2DS2.